We begin with the raw amino-acid sequence, 341 residues long: Paired box protein Pax-9 (341 aa).

The segment at residues 4–130 (AFGEVNQLGG…SSISRILRNK (127 aa)) is a DNA-binding region (paired). The tract at residues 7 to 63 (EVNQLGGVFVNGRPLPNAIRLRIVELAQLGIRPCDISRQLRVSHGCVSKILARYNET) is PAI subdomain. The interval 82–130 (TVVKHIRTYKQRDPGIFAWEIRDRLLADGVCDKYNVPSVSSISRILRNK) is RED subdomain. Residues 168 to 189 (AAAAKVPTPPGVPAIPGSVAMP) form an interaction with KDM5B region.

In terms of assembly, interacts with KDM5B.

It is found in the nucleus. Functionally, transcription factor required for normal development of thymus, parathyroid glands, ultimobranchial bodies, teeth, skeletal elements of skull and larynx as well as distal limbs. The protein is Paired box protein Pax-9 (PAX9) of Macaca mulatta (Rhesus macaque).